The sequence spans 189 residues: Guanylate kinase (189 aa).

One can recognise a Guanylate kinase-like domain in the interval glycine 8–glycine 186. Residue glycine 15–glycine 22 coordinates ATP.

It belongs to the guanylate kinase family.

The protein localises to the cytoplasm. It carries out the reaction GMP + ATP = GDP + ADP. Its function is as follows. Essential for recycling GMP and indirectly, cGMP. The polypeptide is Guanylate kinase (Prochlorococcus marinus (strain MIT 9313)).